Here is a 208-residue protein sequence, read N- to C-terminus: AN1-type zinc finger protein 6 (208 aa).

Residues 8-42 form an A20-type zinc finger; that stretch reads SQVPMLCSTGCGFYGNPRTNGMCSVCYKEHLQRQN. Residues Cys-14, Cys-18, Cys-30, and Cys-33 each contribute to the Zn(2+) site. The disordered stretch occupies residues 41–110; sequence QNSSNGRISP…ASSQVDSTSV (70 aa). Ser-49 carries the post-translational modification Phosphoserine. Over residues 54–68 the composition is skewed to polar residues; sequence SVTSLSESLPVQCTD. Low complexity predominate over residues 83–94; it reads SSVQPSPVSNQS. Residues 95 to 110 are compositionally biased toward polar residues; it reads LLSESVASSQVDSTSV. Residues 143-189 form an AN1-type zinc finger; it reads KQKKNRCFMCRKKVGLTGFECRCGNVYCGVHRYSDVHNCSYNYKADA. Residues Cys-149, Cys-152, Cys-163, Cys-165, Cys-170, His-173, His-179, and Cys-181 each coordinate Zn(2+). N6-acetyllysine is present on Lys-204.

Interacts with PKN1.

The protein is AN1-type zinc finger protein 6 (ZFAND6) of Bos taurus (Bovine).